The sequence spans 425 residues: Serine--tRNA ligase 1 (425 aa).

An L-serine-binding site is contributed by 230–232; the sequence is TSE. ATP-binding positions include 261-263 and V277; that span reads RRE. E284 serves as a coordination point for L-serine. 348-351 contacts ATP; it reads ELTS. T382 is a binding site for L-serine.

This sequence belongs to the class-II aminoacyl-tRNA synthetase family. Type-1 seryl-tRNA synthetase subfamily. Homodimer. The tRNA molecule binds across the dimer.

The protein localises to the cytoplasm. It carries out the reaction tRNA(Ser) + L-serine + ATP = L-seryl-tRNA(Ser) + AMP + diphosphate + H(+). The enzyme catalyses tRNA(Sec) + L-serine + ATP = L-seryl-tRNA(Sec) + AMP + diphosphate + H(+). The protein operates within aminoacyl-tRNA biosynthesis; selenocysteinyl-tRNA(Sec) biosynthesis; L-seryl-tRNA(Sec) from L-serine and tRNA(Sec): step 1/1. Its function is as follows. Catalyzes the attachment of serine to tRNA(Ser). Is also able to aminoacylate tRNA(Sec) with serine, to form the misacylated tRNA L-seryl-tRNA(Sec), which will be further converted into selenocysteinyl-tRNA(Sec). The sequence is that of Serine--tRNA ligase 1 from Streptomyces avermitilis (strain ATCC 31267 / DSM 46492 / JCM 5070 / NBRC 14893 / NCIMB 12804 / NRRL 8165 / MA-4680).